Consider the following 384-residue polypeptide: Sphingosine 1-phosphate receptor 3 (384 aa).

Residues 1–34 (MMINPLIYLHYNYTGKLDHRPTVGTSPGTRDPKT) are Extracellular-facing. N-linked (GlcNAc...) asparagine glycosylation occurs at Asn-12. A helical membrane pass occupies residues 35-55 (IAFLVVCSFIILENLTVLLAI). Residues 56–64 (WKNHRFHNR) are Cytoplasmic-facing. Residues 65-85 (MYFFIGNLALCDLLASVAYLV) traverse the membrane as a helical segment. The Extracellular segment spans residues 86-105 (NLLLSGEKTLQLSPVLWFVR). The helical transmembrane segment at 106 to 126 (EGSMFVTLGASIFSLLAIAIE) threads the bilayer. Topologically, residues 127–144 (RHLTMIKMRPYDASKNYR) are cytoplasmic. A helical membrane pass occupies residues 145 to 165 (VFLLIGTCWLVAVLLGALPIL). Residues 166–186 (GWNCLGNLPDCSTILPLYTKK) are Extracellular-facing. The chain crosses the membrane as a helical span at residues 187 to 207 (YVAFCIIVFIVLLLAMSVLYA). Over 208 to 235 (RIYILVKSSSQKVSKHRNSEHAMSLLRT) the chain is Cytoplasmic. Residues 236 to 256 (VIIVVGVFIACWMPIFVLLLL) form a helical membrane-spanning segment. The Extracellular segment spans residues 257–271 (DVACERPCPILYKAD). The helical transmembrane segment at 272–292 (WFIAVAVLNSAMNPIIYTLAS) threads the bilayer. Over 293–384 (REMRRAFLGL…REGEGGNGGR (92 aa)) the chain is Cytoplasmic. 2 stretches are compositionally biased toward polar residues: residues 315–325 (NDSGNKQFQEP) and 336–347 (QTHPNQSQQSSR). The segment at 315 to 384 (NDSGNKQFQE…REGEGGNGGR (70 aa)) is disordered. Positions 349-359 (AELDREQETGH) are enriched in basic and acidic residues.

Belongs to the G-protein coupled receptor 1 family.

The protein resides in the cell membrane. In terms of biological role, receptor for the lysosphingolipid sphingosine 1-phosphate (S1P). The protein is Sphingosine 1-phosphate receptor 3 (s1pr3) of Takifugu rubripes (Japanese pufferfish).